We begin with the raw amino-acid sequence, 572 residues long: Urease subunit alpha (572 aa).

One can recognise a Urease domain in the interval 136–572; it reads GGIDTHIHFI…VPLGQRYFLF (437 aa). Positions 141, 143, and 224 each coordinate Ni(2+). Lys224 bears the N6-carboxylysine mark. His226 contributes to the substrate binding site. His253 and His279 together coordinate Ni(2+). His327 acts as the Proton donor in catalysis. A Ni(2+)-binding site is contributed by Asp367.

The protein belongs to the metallo-dependent hydrolases superfamily. Urease alpha subunit family. As to quaternary structure, heterotrimer of UreA (gamma), UreB (beta) and UreC (alpha) subunits. Three heterotrimers associate to form the active enzyme. Ni cation is required as a cofactor. Carboxylation allows a single lysine to coordinate two nickel ions.

The protein localises to the cytoplasm. It catalyses the reaction urea + 2 H2O + H(+) = hydrogencarbonate + 2 NH4(+). The protein operates within nitrogen metabolism; urea degradation; CO(2) and NH(3) from urea (urease route): step 1/1. The chain is Urease subunit alpha from Haemophilus influenzae (strain 86-028NP).